A 178-amino-acid polypeptide reads, in one-letter code: uncharacterized protein (178 aa).

The span at 1–13 (MEVASSSSACQFD) shows a compositional bias: polar residues. Disordered stretches follow at residues 1 to 24 (MEVA…ELKP) and 47 to 114 (WPSR…KKEK).

This is an uncharacterized protein from Caenorhabditis elegans.